Consider the following 173-residue polypeptide: Putative metal-dependent hydrolase BCG9842_B2589 (173 aa).

3 residues coordinate Zn(2+): His65, His156, and His160.

The protein belongs to the metal hydrolase YfiT family. As to quaternary structure, homodimer. The cofactor is Zn(2+).

The protein localises to the cytoplasm. Its function is as follows. Possible metal-dependent hydrolase. This chain is Putative metal-dependent hydrolase BCG9842_B2589, found in Bacillus cereus (strain G9842).